Here is a 128-residue protein sequence, read N- to C-terminus: SH2 domain-containing protein 1A (128 aa).

Positions 6–102 constitute an SH2 domain; that stretch reads VYHGKISRET…GIVIPLQYPV (97 aa). Residues 67–92 are interaction with FYN SH3 domain; that stretch reads ETAPGVHKRYFRKIKNLISAFQKPDQ. The residue at position 89 (K89) is an N6-acetyllysine. A disordered region spans residues 106 to 128; sequence SSARSTQGTTGIREDPDVCLKAP. Over residues 117-128 the composition is skewed to basic and acidic residues; it reads IREDPDVCLKAP.

Interacts with CD84, CD244, LY9, SLAMF1 and FYN. Interacts with NTRK1, NTRK2 and NTRK3.

Its subcellular location is the cytoplasm. Its function is as follows. Cytoplasmic adapter regulating receptors of the signaling lymphocytic activation molecule (SLAM) family such as SLAMF1, CD244, LY9, CD84, SLAMF6 and SLAMF7. In SLAM signaling seems to cooperate with SH2D1B/EAT-2. Initially it has been proposed that association with SLAMF1 prevents SLAMF1 binding to inhibitory effectors including INPP5D/SHIP1 and PTPN11/SHP-2. However, by simultaneous interactions, recruits FYN which subsequently phosphorylates and activates SLAMF1. Positively regulates CD244/2B4- and CD84-mediated natural killer (NK) cell functions. Can also promote CD48-, SLAMF6 -, LY9-, and SLAMF7-mediated NK cell activation. In the context of NK cell-mediated cytotoxicity enhances conjugate formation with target cells. May also regulate the activity of the neurotrophin receptors NTRK1, NTRK2 and NTRK3. The polypeptide is SH2 domain-containing protein 1A (SH2D1A) (Macaca mulatta (Rhesus macaque)).